The sequence spans 254 residues: Uracil-DNA glycosylase (254 aa).

The active-site Proton acceptor is the Asp-91.

This sequence belongs to the uracil-DNA glycosylase (UDG) superfamily. UNG family.

It localises to the host nucleus. The catalysed reaction is Hydrolyzes single-stranded DNA or mismatched double-stranded DNA and polynucleotides, releasing free uracil.. Excises uracil residues from the DNA which can arise as a result of misincorporation of dUMP residues by DNA polymerase or deamination of cytosines. Therefore may reduce deleterious uracil incorporation into the viral genome, particularly in terminally differentiated cells which lack DNA repair enzymes. The polypeptide is Uracil-DNA glycosylase (U81) (Homo sapiens (Human)).